The chain runs to 289 residues: Diaminopimelate epimerase (289 aa).

2 residues coordinate substrate: Asn15 and Asn76. Catalysis depends on Cys85, which acts as the Proton donor. Residues 86–87, Asn158, Asn191, and 209–210 contribute to the substrate site; these read GN and ER. Cys218 acts as the Proton acceptor in catalysis. 219 to 220 is a binding site for substrate; that stretch reads GT.

It belongs to the diaminopimelate epimerase family. As to quaternary structure, homodimer.

It is found in the cytoplasm. The enzyme catalyses (2S,6S)-2,6-diaminopimelate = meso-2,6-diaminopimelate. Its pathway is amino-acid biosynthesis; L-lysine biosynthesis via DAP pathway; DL-2,6-diaminopimelate from LL-2,6-diaminopimelate: step 1/1. Its function is as follows. Catalyzes the stereoinversion of LL-2,6-diaminopimelate (L,L-DAP) to meso-diaminopimelate (meso-DAP), a precursor of L-lysine and an essential component of the bacterial peptidoglycan. The polypeptide is Diaminopimelate epimerase (Streptomyces coelicolor (strain ATCC BAA-471 / A3(2) / M145)).